The sequence spans 1338 residues: Insulin receptor substrate 2 (1338 aa).

The span at 1-12 (MASPPRHGPPGP) shows a compositional bias: pro residues. Disordered stretches follow at residues 1-31 (MASP…NHSV) and 49-72 (VLRG…QPPR). Positions 16–144 (DGPNLNNNNN…WYRALTDLVS (129 aa)) constitute a PH domain. The segment covering 19–28 (NLNNNNNNNN) has biased composition (low complexity). The span at 53–66 (PGAGGDEATAGGGS) shows a compositional bias: gly residues. In terms of domain architecture, IRS-type PTB spans 194 to 298 (YREVWQVNLK…EAMKALKELF (105 aa)). A disordered region spans residues 303–411 (RSKSQSSGSS…SHTLSGGCGG (109 aa)). S306 and S346 each carry phosphoserine. Residue T350 is modified to Phosphothreonine. Phosphoserine is present on residues S365, S384, S388, and S391. The residue at position 412 (R412) is an Omega-N-methylarginine. The interval 428 to 537 (SRSMSMPVAH…PPARDGGGGG (110 aa)) is disordered. A compositionally biased stretch (low complexity) spans 444–453 (SPGSLSSSSG). A compositionally biased stretch (pro residues) spans 459 to 471 (YPPPPGPHPPLPH). A compositionally biased stretch (low complexity) spans 475-493 (HGPGQRPSSGSASASGSPS). Residue T520 is modified to Phosphothreonine. S523 bears the Phosphoserine mark. T527 is subject to Phosphothreonine. Y540 is subject to Phosphotyrosine; by INSR. The YXXM motif 1 signature appears at 540 to 543 (YGYM). S560 carries the phosphoserine; by PLK1 modification. A Phosphoserine modification is found at S577. 2 positions are modified to phosphothreonine: T579 and T580. S594 is modified (phosphoserine). Positions 598-601 (YTLM) match the YXXM motif 2 motif. Residues S608 and S620 each carry the phosphoserine modification. Residues Y653 and Y675 each carry the phosphotyrosine; by INSR modification. 2 consecutive short sequence motifs (YXXM motif) follow at residues 653–656 (YMPM) and 675–678 (YMPM). A phosphoserine mark is found at S679 and S682. Positions 703 to 719 (PSAGPAGPAPTSAAGRT) are enriched in low complexity. The segment at 703–739 (PSAGPAGPAPTSAAGRTFPASGGGYKASSPAESSPED) is disordered. S735 and S736 each carry phosphoserine. The YXXM motif 5 motif lies at 742 to 745 (YMRM). S770 is subject to Phosphoserine. T779 is subject to Phosphothreonine. S805 is subject to Phosphoserine. The short motif at 823-826 (YVLM) is the YXXM motif 6 element. S828 bears the Phosphoserine mark. Residues 840–1101 (EPQATPGPSQ…KPEAARVASP (262 aa)) are disordered. Residues 859–870 (TQPPHPVVPSPV) are compositionally biased toward pro residues. Phosphoserine is present on S915. A Phosphotyrosine; by INSR modification is found at Y919. The span at 938-967 (LLASAASSSSLLSASSPASSLGSGTPGTSS) shows a compositional bias: low complexity. Phosphoserine is present on S973. Y978 carries the phosphotyrosine; by INSR modification. Residues 1013 to 1022 (PYPPLPPRPS) show a composition bias toward pro residues. The YXXM motif 7 signature appears at 1072–1075 (YTEM). T1082 is modified (phosphothreonine). Residues 1083-1093 (PPQPIAAPPKP) show a composition bias toward pro residues. S1100 is subject to Phosphoserine. S1109 is subject to Phosphoserine; by PLK1. A disordered region spans residues 1121–1296 (LQASQPPDPH…TRSLGGLISA (176 aa)). A compositionally biased stretch (low complexity) spans 1150-1165 (ETFSSTTTVTPVSPSF). T1159 is modified (phosphothreonine). Phosphoserine is present on residues S1162, S1174, S1176, and S1186. Residues 1174 to 1183 (SASVENVSLR) show a composition bias toward polar residues. The segment covering 1188–1198 (GGVGVGPGGGD) has biased composition (gly residues). At S1203 the chain carries Phosphoserine. Gly residues predominate over residues 1224–1236 (QPGGLVGCPGSGG). Y1253 carries the post-translational modification Phosphotyrosine; by INSR. Residues 1263–1277 (GLPPQPQPPPPPLPQ) are compositionally biased toward pro residues. K1331 is covalently cross-linked (Glycyl lysine isopeptide (Lys-Gly) (interchain with G-Cter in ubiquitin)).

Interacts with PHIP. Interacts with SH2B1; this interaction enhances leptin-induced activation of the PI3-kinase pathway. Interacts with GRB2. Interacts with PIK3R1. Interacts with DVL2; this interaction promotes the Wnt/beta-catenin signaling pathway. Phosphorylation fluctuates in a cell-cycle dependent manner with hyperphosphorylation during mitosis. Phosphorylated at Ser-560 and Ser-1109 by PLK1; these phosphorylations prevent the activation of the PI3K pathway upon growth factor stimulation by inhibiting the binding between IRS2 and the PI3K pathway components and increasing the level of IRS2 protein degradation. In addition, they prevent premature mitotic exit. In terms of processing, monoubiquitinated by NEDD4; leading to enhanced IGF1 signaling. During cell cycle, ubiquitination and proteasomal degradation are controlled by FZR1.

Its subcellular location is the cytoplasm. The protein resides in the cytosol. Functionally, signaling adapter protein that participates in the signal transduction from two prominent receptor tyrosine kinases, insulin receptor/INSR and insulin-like growth factor I receptor/IGF1R. Plays therefore an important role in development, growth, glucose homeostasis as well as lipid metabolism. Upon phosphorylation by the insulin receptor, functions as a signaling scaffold that propagates insulin action through binding to SH2 domain-containing proteins including the p85 regulatory subunit of PI3K, NCK1, NCK2, GRB2 or SHP2. Recruitment of GRB2 leads to the activation of the guanine nucleotide exchange factor SOS1 which in turn triggers the Ras/Raf/MEK/MAPK signaling cascade. Activation of the PI3K/AKT pathway is responsible for most of insulin metabolic effects in the cell, and the Ras/Raf/MEK/MAPK is involved in the regulation of gene expression and in cooperation with the PI3K pathway regulates cell growth and differentiation. Acts a positive regulator of the Wnt/beta-catenin signaling pathway through suppression of DVL2 autophagy-mediated degradation leading to cell proliferation. Plays a role in cell cycle progression by promoting a robust spindle assembly checkpoint (SAC) during M-phase. In macrophages, IL4-induced tyrosine phosphorylation of IRS2 leads to the recruitment and activation of phosphoinositide 3-kinase (PI3K). The polypeptide is Insulin receptor substrate 2 (IRS2) (Homo sapiens (Human)).